A 28-amino-acid chain; its full sequence is Cyclotide vodo I2 (28 aa).

3 disulfide bridges follow: C4–C18, C8–C20, and C13–C25.

This is a cyclic peptide. In terms of processing, contains 3 disulfide bonds.

In terms of biological role, probably participates in a plant defense mechanism. The protein is Cyclotide vodo I2 of Viola odorata (Sweet violet).